We begin with the raw amino-acid sequence, 587 residues long: V-type proton ATPase catalytic subunit A (587 aa).

ATP is bound at residue 243–250 (GAFGCGKT).

It belongs to the ATPase alpha/beta chains family. As to quaternary structure, V-ATPase is a heteromultimeric enzyme composed of a peripheral catalytic V1 complex (main components: subunits A, B, C, D, E, and F) attached to an integral membrane V0 proton pore complex (main component: the proteolipid protein).

The enzyme catalyses ATP + H2O + 4 H(+)(in) = ADP + phosphate + 5 H(+)(out). In terms of biological role, catalytic subunit of the peripheral V1 complex of vacuolar ATPase. V-ATPase vacuolar ATPase is responsible for acidifying a variety of intracellular compartments in eukaryotic cells. The sequence is that of V-type proton ATPase catalytic subunit A from Cyanidium caldarium (Red alga).